We begin with the raw amino-acid sequence, 100 residues long: Large ribosomal subunit protein uL23 (100 aa).

The protein belongs to the universal ribosomal protein uL23 family. As to quaternary structure, part of the 50S ribosomal subunit. Contacts protein L29, and trigger factor when it is bound to the ribosome.

Functionally, one of the early assembly proteins it binds 23S rRNA. One of the proteins that surrounds the polypeptide exit tunnel on the outside of the ribosome. Forms the main docking site for trigger factor binding to the ribosome. This chain is Large ribosomal subunit protein uL23, found in Mycobacterium leprae (strain Br4923).